A 219-amino-acid polypeptide reads, in one-letter code: MTIRILCDFDGTVTEHDNIIALMTEFAPPEAFEPLKKGVLDQSLSIQSGVGQMFRLLPSDRKQDYIDFLEQRAVIRPGFKTLLAFAKSNGIDFAIVSGGIDFFVQPILQELLTDEAIYCNGSDFSGETIRIEWPHTCDAACNNQCGCCKTSIARKLKQDGDIIVTIGDSVTDFELAKQADHVYARDYLITLCEQHGIAYTPFETFYDIVDHLQTTEVYA.

This sequence belongs to the HAD-like hydrolase superfamily. MtnX family.

It catalyses the reaction 2-hydroxy-5-methylsulfanyl-3-oxopent-1-enyl phosphate + H2O = 1,2-dihydroxy-5-(methylsulfanyl)pent-1-en-3-one + phosphate. It participates in amino-acid biosynthesis; L-methionine biosynthesis via salvage pathway; L-methionine from S-methyl-5-thio-alpha-D-ribose 1-phosphate: step 4/6. Its function is as follows. Dephosphorylates 2-hydroxy-3-keto-5-methylthiopentenyl-1-phosphate (HK-MTPenyl-1-P) yielding 1,2-dihydroxy-3-keto-5-methylthiopentene (DHK-MTPene). This chain is 2-hydroxy-3-keto-5-methylthiopentenyl-1-phosphate phosphatase, found in Exiguobacterium sibiricum (strain DSM 17290 / CCUG 55495 / CIP 109462 / JCM 13490 / 255-15).